A 784-amino-acid polypeptide reads, in one-letter code: Protein-tyrosine-phosphatase MKP1 (784 aa).

Disordered regions lie at residues 1-73 (MVGR…NSKA) and 94-118 (PKAG…TGER). Over residues 22-34 (WRSASWSASRTAS) the composition is skewed to low complexity. 2 positions are modified to phosphothreonine: Thr-64 and Thr-109. A Tyrosine-protein phosphatase domain is found at 149–291 (ECSKVADHIY…LLQCQKRVHA (143 aa)). The Phosphocysteine intermediate role is filled by Cys-235. 235 to 241 (CCQGVSR) contributes to the substrate binding site. The interval 488–586 (HSSGSPSSTT…ASPSLAERRG (99 aa)) is disordered. Low complexity-rich tracts occupy residues 489–510 (SSGS…FLSP) and 521–553 (SLKS…LSLL). Positions 554-577 (PSQTSPKESRGVNTFLQPSPNRKA) are enriched in polar residues. Ser-558 and Ser-572 each carry phosphoserine.

As to quaternary structure, interacts with MPK6. May interact with MPK3 and MPK4. Post-translationally, phosphorylated on threonine and serine residues by MPK6.

It localises to the cytoplasm. Its subcellular location is the cytosol. The enzyme catalyses O-phospho-L-tyrosyl-[protein] + H2O = L-tyrosyl-[protein] + phosphate. Functionally, protein-tyrosine-phosphatase that acts as a negative regulator of MPK6 and MPK3 signaling by dephosphorylating and repressing MPK6 and MPK3. Modulates defense response by repressing salicylic acid (SA) production, camalexin biosynthesis and SNC1-mediated responses. Acts as a negative regulator of MPK6-mediated pathogen-associated molecular pattern (PAMP) responses, including MPK6 and MPK3 activation, accumulation of extracellular reactive oxygen species and inhibition of seedling growth. Involved in UV-B stress tolerance. May be involved in salt and genotoxic stress responses. This is Protein-tyrosine-phosphatase MKP1 (MKP1) from Arabidopsis thaliana (Mouse-ear cress).